A 99-amino-acid chain; its full sequence is MSTLTKSDMIEHLMSHLNLTRQEGRCLVENFFDELSESLIDGKEVKLSGFGNFELKDKNSRPGRNPKTGEPVAVSARRVVTFKTGQKFRQQVDERLFDQ.

It belongs to the bacterial histone-like protein family. As to quaternary structure, heterodimer of an alpha and a beta chain.

In terms of biological role, this protein is one of the two subunits of integration host factor, a specific DNA-binding protein that functions in genetic recombination as well as in transcriptional and translational control. This Psychrobacter arcticus (strain DSM 17307 / VKM B-2377 / 273-4) protein is Integration host factor subunit alpha.